Consider the following 373-residue polypeptide: 2-phosphonomethylmalate synthase (373 aa).

In terms of domain architecture, Pyruvate carboxyltransferase spans 5–256 (LVLEDTTLRD…DLGIDLTKLK (252 aa)).

This sequence belongs to the alpha-IPM synthase/homocitrate synthase family.

It catalyses the reaction 3-phosphonopyruvate + acetyl-CoA + H2O = (R)-2-(phosphonomethyl)malate + CoA + H(+). The protein operates within antibiotic biosynthesis. Functionally, acyltransferase involved in the biosynthesis of the phosphonate antibiotic FR-900098, a potent antimalarial agent that acts as an inhibitor of 1-deoxy-D-xylulose 5-phosphate reductoisomerase (DXR), the first enzyme in the nonmevalonate pathway for isoprenoid biosynthesis. Catalyzes the condensation between acetyl-CoA and phosphonopyruvate to yield (R)-2-(phosphonomethyl)malate. This is 2-phosphonomethylmalate synthase from Streptomyces rubellomurinus (strain ATCC 31215).